The following is a 517-amino-acid chain: Maturase K (517 aa).

The protein belongs to the intron maturase 2 family. MatK subfamily.

It is found in the plastid. The protein localises to the chloroplast. Functionally, usually encoded in the trnK tRNA gene intron. Probably assists in splicing its own and other chloroplast group II introns. The polypeptide is Maturase K (Caryota mitis (Burmese fishtail palm)).